An 809-amino-acid polypeptide reads, in one-letter code: MAYEAGKIEKKWQKIWQEKEYFEPKDDFSLPKKYILSMFPYPSGRIHMGHVRNYSIGDAMARYYRKKGFNVLHPIGFDSFGMPAENAAIKHGIHPKKWTYENIDYMQNELASLGFSFSKKRMLATSDPLYTKFEQEFFIKMYEKGLIYTKEAEVNWCENDKTVLANEQVEDGKCWRCGHEVIRKKMPGYYVKITAYADELLQDLKKLEGKWPSQVLTMQENWIGKSTGLSFDFDIEENNKISAKKINVFTTRAETIYGVSYIALAPDHEIVNELIDKKLLDQDVIAKIQNIQNQTPRQRQAAPKEGYFLNLYVIHPLSKEKIPLWVANFVLSDYGSGAVMSVPAHDERDYEFAKTYNLAIKKVIYKDENDAQCYTLKEGVLTSSGEFDQLECNDAREKISLKIESLGIGKKVTNFKIRDWGVSRQRYWGAPIPMIKCDSCGIVPQKIENLPITLPEDVVINGEGNPLDKHETWKECICPKCGKKAQKESDTLDTFFESSWYFARFASDDKTWQEKAVDEKSVNYWMNVDEYIGGIEHAILHLLYARFFQKALRDLGYLKDDEPFNRLLTQGMVTKDGAKMSKSKGNVVDPDYIIEKYGADSARLFILFAAPPAKELEWNDSALEGAFKFINRLYEKAMSLECGKLQEIDHQSLNKEEKYARLKVYEALKKSFEVYEESFAFNTLIAACMEALNALNAINHKEVSKEAFYIILNILEPIIPHVCFELSEYLFKCENFKVLKIKDEVFIKDSFNIAISVNGKKRAQIEINSEAKEDEILALAKENVAKWLEGKTIVKEIYIDKKLVNLVVK.

Positions 40-50 (PYPSGRIHMGH) match the 'HIGH' region motif. Residues 579 to 583 (KMSKS) carry the 'KMSKS' region motif. K582 contributes to the ATP binding site.

The protein belongs to the class-I aminoacyl-tRNA synthetase family.

The protein resides in the cytoplasm. The catalysed reaction is tRNA(Leu) + L-leucine + ATP = L-leucyl-tRNA(Leu) + AMP + diphosphate. This chain is Leucine--tRNA ligase, found in Campylobacter lari (strain RM2100 / D67 / ATCC BAA-1060).